A 480-amino-acid chain; its full sequence is MLNFGASLQQASEGKMELISEKSKEGAHPWDKAEQSDFEAVEALMSMSCDWKSHFKKYLENRPVTPVSDTSEEDSLLPGTPDLQTVPAFCLTPPYSPSDFEPSQGSNLTAPAPPTGHFRSLSDAAKPPSIAPFKEEEKSPLAAPPLPKAQATSVIRHTADAQLCNHQSCPVKAASILNYQDNSFRRRTHINVEATRKNIPCAAVSPNRPKPEPSTAANGAEKAGTAPYDFAVPSSETVICRSSQPAPTSPVQKSVLMSSPTVSTGGVPPLPVICQMVPLPANNSLVTTVVPSSPPSQPPAVCSPVLFMGTQVPKGTVMFVVPQPVVQSPKPPVVSPNGTRLSPIAPAPGFSPSAARVTPQIDSSRVRSHICSHPGCGKTYFKSSHLKAHVRTHTGEKPFSCSWKGCERRFARSDELSRHRRTHTGEKKFACPMCDRRFMRSDHLTKHARRHLSAKKLPNWQMEVSKLNDIALPPATASAQ.

A compositionally biased stretch (polar residues) spans 1–12 (MLNFGASLQQAS). Disordered stretches follow at residues 1-32 (MLNF…PWDK), 64-83 (VTPV…TPDL), and 97-146 (PSDF…APPL). Residues 14–32 (GKMELISEKSKEGAHPWDK) are compositionally biased toward basic and acidic residues. Ser-183 carries the post-translational modification Phosphoserine. The disordered stretch occupies residues 202-222 (AAVSPNRPKPEPSTAANGAEK). Ser-249 carries the phosphoserine modification. 3 consecutive C2H2-type zinc fingers follow at residues 369-393 (HICS…VRTH), 399-423 (FSCS…RRTH), and 429-451 (FACP…ARRH).

It belongs to the Sp1 C2H2-type zinc-finger protein family. Ubiquitinated; mediated by SIAH1 and leading to its subsequent proteasomal degradation.

The protein localises to the nucleus. Its function is as follows. Transcriptional repressor which binds to the consensus sequence 5'-GGTGTG-3'. Regulates the circadian expression of genes involved in lipogenesis, gluconeogenesis, and glycolysis in the liver. Represses the expression of PCK2, a rate-limiting step enzyme of gluconeogenesis. May play a role in the cell cycle regulation. Plays a role in the regulation of the circadian clock; binds to the GC box sequence in the promoter of the core clock component ARTNL/BMAL1 and represses its transcriptional activity. This is Krueppel-like factor 10 (Klf10) from Rattus norvegicus (Rat).